A 397-amino-acid chain; its full sequence is MEELQEPLRGQLRLCFTQAARTSLLLLRLNDAALRALQECQRQQVRPVIAFQGHRGYLRLPGPGWSCLFSFIVSQCCQEGAGGSLDLVCQRFLRSGPNSLHCLGSLRERLIIWAAMDSIPAPSSVQGHNLTEDARHPESWQNTGGYSEGDAVSQPQMALEEVSVSDPLASNQGQSLPGSSREHMAQWEVRSQTHVPNREPVQALPSSASRKRLDKKRSVPVATVELEEKRFRTLPLVPSPLQGLTNQDLQEGEDWEQEDEDMDPRLEHSSSVQEDSESPSPEDIPDYLLQYRAIHSAEQQHAYEQDFETDYAEYRILHARVGTASQRFIELGAEIKRVRRGTPEYKVLEDKIIQEYKKFRKQYPSYREEKRRCEYLHQKLSHIKGLILEFEEKNRGS.

Disordered stretches follow at residues 164 to 219 (VSDP…KRSV) and 237 to 284 (VPSP…PEDI). Positions 168-178 (LASNQGQSLPG) are enriched in polar residues. Over residues 250–262 (QEGEDWEQEDEDM) the composition is skewed to acidic residues. Low complexity predominate over residues 269–281 (SSSVQEDSESPSP). An OCEL domain is found at 285–395 (PDYLLQYRAI…LILEFEEKNR (111 aa)).

It belongs to the ELL/occludin family. As to quaternary structure, interacts with AFF4. Component of the super elongation complex (SEC), at least composed of EAF1, EAF2, CDK9, MLLT3/AF9, AFF (AFF1 or AFF4), the P-TEFb complex and ELL (ELL, ELL2 or ELL3). Component of the little elongation complex (LEC), at least composed of ELL (ELL, ELL2 or ELL3), ZC3H8, ICE1 and ICE2. Testis specific.

It localises to the nucleus. In terms of biological role, enhancer-binding elongation factor that specifically binds enhancers in embryonic stem cells (ES cells), marks them, and is required for their future activation during stem cell specification. Does not only bind to enhancer regions of active genes, but also marks the enhancers that are in a poised or inactive state in ES cells and is required for establishing proper RNA polymerase II occupancy at developmentally regulated genes in a cohesin-dependent manner. Probably required for priming developmentally regulated genes for later recruitment of the super elongation complex (SEC), for transcriptional activation during differentiation. Required for recruitment of P-TEFb within SEC during differentiation. Probably preloaded on germ cell chromatin, suggesting that it may prime gene activation by marking enhancers as early as in the germ cells. Promoting epithelial-mesenchymal transition (EMT). Elongation factor component of the super elongation complex (SEC), a complex required to increase the catalytic rate of RNA polymerase II transcription by suppressing transient pausing by the polymerase at multiple sites along the DNA. Component of the little elongation complex (LEC), a complex required to regulate small nuclear RNA (snRNA) gene transcription by RNA polymerase II and III. The protein is RNA polymerase II elongation factor ELL3 (ELL3) of Homo sapiens (Human).